A 390-amino-acid chain; its full sequence is MAQQTIESNNKKSVNRGKDIAKDTILTPNFYTTDFEAMEKMDLSINEDELEAICEEFRKDYNRHHFVRNKEFEGAADKIDAETRELFVDFLEGSCTSEFSGFLLYKELSKRIKDKNPLLAECFAHMARDEARHAGFLNKSMNDFGLQLDLGFLTANKDYTYFAPRAIFYATYISEKIGYWRYIAIYRHLEKNPSGKIFPLFNFFENWCQDENRHGDFFDALMKAQPRTVKSLSQKIEIFGYTLKHPIFDYYHRFRYFLNNHPIVSKLWSRFFLLAVFATMYIRDLGTKRNFYGALGLNAREYDQFVINKTNETSAKVFPVVLNVYDKSFYKRLDRIVENGTRLSEIDKKENPNVIKVLSKLPIFISNGYQLIRLYLLKPLESDDFQPSIR.

It belongs to the AcsF family. Requires Fe cation as cofactor.

It catalyses the reaction Mg-protoporphyrin IX 13-monomethyl ester + 3 NADPH + 3 O2 + 2 H(+) = 3,8-divinyl protochlorophyllide a + 3 NADP(+) + 5 H2O. It functions in the pathway porphyrin-containing compound metabolism; chlorophyll biosynthesis (light-independent). Catalyzes the formation of the isocyclic ring in chlorophyll biosynthesis. Mediates the cyclase reaction, which results in the formation of divinylprotochlorophyllide (Pchlide) characteristic of all chlorophylls from magnesium-protoporphyrin IX 13-monomethyl ester (MgPMME). This is Magnesium-protoporphyrin IX monomethyl ester [oxidative] cyclase from Prochlorococcus marinus subsp. pastoris (strain CCMP1986 / NIES-2087 / MED4).